We begin with the raw amino-acid sequence, 421 residues long: AP-3 complex subunit mu (421 aa).

An MHD domain is found at Gln178–Arg420.

The protein belongs to the adaptor complexes medium subunit family. As to quaternary structure, adaptor protein complex 3 (AP-3) is a heterotetramer composed of two large adaptins (delta-type subunit and beta-type subunit), a medium adaptin (mu-type subunit) and a small adaptin (sigma-type subunit).

The protein localises to the endosome membrane. Functionally, part of the AP-3 complex, an adaptor-related complex which is essential for the compartmentalization of the endocytic pathway. This Dictyostelium discoideum (Social amoeba) protein is AP-3 complex subunit mu (apm3).